A 135-amino-acid chain; its full sequence is Small ribosomal subunit protein uS11 (135 aa).

The protein belongs to the universal ribosomal protein uS11 family. As to quaternary structure, part of the 30S ribosomal subunit. Interacts with proteins S7 and S18. Binds to IF-3.

Functionally, located on the platform of the 30S subunit, it bridges several disparate RNA helices of the 16S rRNA. Forms part of the Shine-Dalgarno cleft in the 70S ribosome. This Solibacter usitatus (strain Ellin6076) protein is Small ribosomal subunit protein uS11.